Here is a 550-residue protein sequence, read N- to C-terminus: Hydroxylamine reductase (550 aa).

Cysteine 3, cysteine 6, cysteine 18, and cysteine 25 together coordinate [2Fe-2S] cluster. 8 residues coordinate hybrid [4Fe-2O-2S] cluster: histidine 249, glutamate 273, cysteine 317, cysteine 405, cysteine 433, cysteine 458, glutamate 492, and lysine 494. At cysteine 405 the chain carries Cysteine persulfide.

This sequence belongs to the HCP family. [2Fe-2S] cluster is required as a cofactor. The cofactor is hybrid [4Fe-2O-2S] cluster.

It localises to the cytoplasm. It carries out the reaction A + NH4(+) + H2O = hydroxylamine + AH2 + H(+). Functionally, catalyzes the reduction of hydroxylamine to form NH(3) and H(2)O. This is Hydroxylamine reductase from Salmonella typhimurium (strain LT2 / SGSC1412 / ATCC 700720).